The sequence spans 104 residues: Flagellar hook-basal body complex protein FliE (104 aa).

The protein belongs to the FliE family.

It localises to the bacterial flagellum basal body. This is Flagellar hook-basal body complex protein FliE from Pectobacterium atrosepticum (strain SCRI 1043 / ATCC BAA-672) (Erwinia carotovora subsp. atroseptica).